Here is a 269-residue protein sequence, read N- to C-terminus: 4-hydroxy-tetrahydrodipicolinate reductase (269 aa).

NAD(+)-binding positions include 8 to 13 (GAAGRM) and Glu-34. Residue Arg-35 participates in NADP(+) binding. Residues 98–100 (GTT) and 122–125 (APNY) each bind NAD(+). The active-site Proton donor/acceptor is His-155. Position 156 (His-156) interacts with (S)-2,3,4,5-tetrahydrodipicolinate. Lys-159 serves as the catalytic Proton donor. 165-166 (GT) is a (S)-2,3,4,5-tetrahydrodipicolinate binding site.

This sequence belongs to the DapB family.

It localises to the cytoplasm. It catalyses the reaction (S)-2,3,4,5-tetrahydrodipicolinate + NAD(+) + H2O = (2S,4S)-4-hydroxy-2,3,4,5-tetrahydrodipicolinate + NADH + H(+). It carries out the reaction (S)-2,3,4,5-tetrahydrodipicolinate + NADP(+) + H2O = (2S,4S)-4-hydroxy-2,3,4,5-tetrahydrodipicolinate + NADPH + H(+). The protein operates within amino-acid biosynthesis; L-lysine biosynthesis via DAP pathway; (S)-tetrahydrodipicolinate from L-aspartate: step 4/4. Functionally, catalyzes the conversion of 4-hydroxy-tetrahydrodipicolinate (HTPA) to tetrahydrodipicolinate. The polypeptide is 4-hydroxy-tetrahydrodipicolinate reductase (Vibrio cholerae serotype O1 (strain ATCC 39315 / El Tor Inaba N16961)).